The primary structure comprises 294 residues: GTPase Era (294 aa).

Positions K3–E170 constitute an Era-type G domain. The interval G11 to S18 is G1. G11–S18 is a binding site for GTP. The segment at Q37–N41 is G2. The tract at residues D58–G61 is G3. GTP-binding positions include D58–I62 and N120–D123. The G4 stretch occupies residues N120–D123. The tract at residues I149–A151 is G5. One can recognise a KH type-2 domain in the interval L201–K278.

This sequence belongs to the TRAFAC class TrmE-Era-EngA-EngB-Septin-like GTPase superfamily. Era GTPase family. In terms of assembly, monomer.

Its subcellular location is the cytoplasm. The protein localises to the cell membrane. An essential GTPase that binds both GDP and GTP, with rapid nucleotide exchange. Plays a role in 16S rRNA processing and 30S ribosomal subunit biogenesis and possibly also in cell cycle regulation and energy metabolism. This is GTPase Era from Clostridium novyi (strain NT).